The following is a 170-amino-acid chain: UPF0260 protein RPB_3505 (170 aa).

The protein belongs to the UPF0260 family.

The chain is UPF0260 protein RPB_3505 from Rhodopseudomonas palustris (strain HaA2).